Consider the following 61-residue polypeptide: MAKKSMIAKAARKPKFSARGYTRCQICGRPHSVYKDFGICRVCLRKMANEGLIPGLKKASW.

Residues Cys24, Cys27, Cys40, and Cys43 each coordinate Zn(2+).

It belongs to the universal ribosomal protein uS14 family. Zinc-binding uS14 subfamily. Part of the 30S ribosomal subunit. Contacts proteins S3 and S10. It depends on Zn(2+) as a cofactor.

Its function is as follows. Binds 16S rRNA, required for the assembly of 30S particles and may also be responsible for determining the conformation of the 16S rRNA at the A site. This chain is Small ribosomal subunit protein uS14, found in Campylobacter fetus subsp. fetus (strain 82-40).